Reading from the N-terminus, the 495-residue chain is MRSPVRDLARNDGEESTDRTPLLPGAPRAEAAPVCCSARYNLAILAFFGFFIVYALRVNLSVALVDMVDSNTTLEDNRTSKACPEHSAPIKVHHNQTGKKYQWDAETQGWILGSFFYGYIITQIPGGYVASKIGGKMLLGFGILGTAVLTLFTPIAADLGVGPLIVLRALEGLGEGVTFPAMHAMWSSWAPPLERSKLLSISYAGAQLGTVISLPLSGIICYYMNWTYVFYFFGTIGIFWFLLWIWLVSDTPQKHKRISHYEKEYILSSLRNQLSSQKSVPWVPILKSLPLWAIVVAHFSYNWTFYTLLTLLPTYMKEILRFNVQENGFLSSLPYLGSWLCMILSGQAADNLRAKWNFSTLCVRRIFSLIGMIGPAVFLVAAGFIGCDYSLAVAFLTISTTLGGFCSSGFSINHLDIAPSYAGILLGITNTFATIPGMVGPVIAKSLTPDNTVGEWQTVFYIAAAINVFGAIFFTLFAKGEVQNWALNDHHGHRH.

Positions 1 to 18 (MRSPVRDLARNDGEESTD) are enriched in basic and acidic residues. A disordered region spans residues 1 to 24 (MRSPVRDLARNDGEESTDRTPLLP). At 1–41 (MRSPVRDLARNDGEESTDRTPLLPGAPRAEAAPVCCSARYN) the chain is on the cytoplasmic side. Phosphoserine is present on Ser3. A Dileucine internalization motif motif is present at residues 22-23 (LL). A helical transmembrane segment spans residues 42–62 (LAILAFFGFFIVYALRVNLSV). Over 63-109 (ALVDMVDSNTTLEDNRTSKACPEHSAPIKVHHNQTGKKYQWDAETQG) the chain is Lumenal. N-linked (GlcNAc...) asparagine glycosylation is found at Asn71, Asn77, and Asn95. Residues 110–130 (WILGSFFYGYIITQIPGGYVA) form a helical membrane-spanning segment. The Cytoplasmic segment spans residues 131 to 136 (SKIGGK). Residues 137-157 (MLLGFGILGTAVLTLFTPIAA) form a helical membrane-spanning segment. A topological domain (lumenal) is located at residue Asp158. A helical membrane pass occupies residues 159–179 (LGVGPLIVLRALEGLGEGVTF). Residues 180-200 (PAMHAMWSSWAPPLERSKLLS) are Cytoplasmic-facing. Residues 201-221 (ISYAGAQLGTVISLPLSGIIC) form a helical membrane-spanning segment. Over 222–227 (YYMNWT) the chain is Lumenal. The helical transmembrane segment at 228–248 (YVFYFFGTIGIFWFLLWIWLV) threads the bilayer. At 249-279 (SDTPQKHKRISHYEKEYILSSLRNQLSSQKS) the chain is on the cytoplasmic side. A helical transmembrane segment spans residues 280–300 (VPWVPILKSLPLWAIVVAHFS). Residues 301-328 (YNWTFYTLLTLLPTYMKEILRFNVQENG) lie on the Lumenal side of the membrane. Residues 329 to 349 (FLSSLPYLGSWLCMILSGQAA) form a helical membrane-spanning segment. The Cytoplasmic portion of the chain corresponds to 350–365 (DNLRAKWNFSTLCVRR). A helical transmembrane segment spans residues 366–386 (IFSLIGMIGPAVFLVAAGFIG). Over 387–391 (CDYSL) the chain is Lumenal. Residues 392 to 412 (AVAFLTISTTLGGFCSSGFSI) traverse the membrane as a helical segment. The Cytoplasmic portion of the chain corresponds to 413-423 (NHLDIAPSYAG). Residues 424-444 (ILLGITNTFATIPGMVGPVIA) traverse the membrane as a helical segment. Topologically, residues 445 to 457 (KSLTPDNTVGEWQ) are lumenal. A helical transmembrane segment spans residues 458–478 (TVFYIAAAINVFGAIFFTLFA). Topologically, residues 479–495 (KGEVQNWALNDHHGHRH) are cytoplasmic.

The protein belongs to the major facilitator superfamily. Sodium/anion cotransporter family. In terms of tissue distribution, in the adult, detected in placenta, kidney and pancreas. Abundant in the endothelial cells of tumors from ovary, colon, breast and lung, but is not detected in endothelial cells from the corresponding normal tissues. Highly expressed in salivary glands and liver, with lower levels of expression in brain, spleen kidney, muscle and pancreas. Expressed in acinar cells of salivary glands (at protein level).

The protein resides in the basolateral cell membrane. It localises to the cytoplasmic vesicle. It is found in the secretory vesicle. Its subcellular location is the synaptic vesicle membrane. The protein localises to the lysosome membrane. The enzyme catalyses N-acetylneuraminate(in) + H(+)(in) = N-acetylneuraminate(out) + H(+)(out). It carries out the reaction D-glucuronate(out) + H(+)(out) = D-glucuronate(in) + H(+)(in). It catalyses the reaction 2 nitrate(out) + H(+)(out) = 2 nitrate(in) + H(+)(in). The catalysed reaction is L-aspartate(out) = L-aspartate(in). The enzyme catalyses L-glutamate(out) = L-glutamate(in). It carries out the reaction N-acetyl-L-aspartyl-L-glutamate(out) = N-acetyl-L-aspartyl-L-glutamate(in). Its function is as follows. Multifunctional anion transporter that operates via two distinct transport mechanisms, namely proton-coupled anion cotransport and membrane potential-dependent anion transport. Electroneutral proton-coupled acidic monosaccharide symporter, with a sugar to proton stoichiometry of 1:1. Exports glucuronic acid and free sialic acid derived from sialoglycoconjugate degradation out of lysosomes, driven by outwardly directed lysosomal pH gradient. May regulate lysosome function and metabolism of sialylated conjugates that impact oligodendrocyte lineage differentiation and myelinogenesis in the central nervous system. Electrogenic proton-coupled nitrate symporter that transports nitrate ions across the basolateral membrane of salivary gland acinar cells, with nitrate to proton stoichiometry of 2:1. May contribute to nitrate clearance from serum by salivary glands, where it is further concentrated and secreted in the saliva. Uses membrane potential to drive the uptake of acidic amino acids and peptides into synaptic vesicles. Responsible for synaptic vesicular storage of L-aspartate and L-glutamate in pinealocytes as well as vesicular uptake of N-acetyl-L-aspartyl-L-glutamate neuropeptide, relevant to aspartegic-associated glutamatergic neurotransmission and activation of metabotropic receptors that inhibit subsequent transmitter release. Receptor for CM101, a polysaccharide produced by group B Streptococcus with antipathoangiogenic properties. The sequence is that of Sialin (SLC17A5) from Homo sapiens (Human).